The chain runs to 211 residues: Guanylate kinase (211 aa).

The Guanylate kinase-like domain occupies 5 to 185 (GLLLILSSPS…AEEQLKMILS (181 aa)). 12-19 (SPSGAGKS) lines the ATP pocket.

The protein belongs to the guanylate kinase family.

The protein localises to the cytoplasm. The enzyme catalyses GMP + ATP = GDP + ADP. In terms of biological role, essential for recycling GMP and indirectly, cGMP. This chain is Guanylate kinase, found in Cereibacter sphaeroides (strain ATCC 17023 / DSM 158 / JCM 6121 / CCUG 31486 / LMG 2827 / NBRC 12203 / NCIMB 8253 / ATH 2.4.1.) (Rhodobacter sphaeroides).